The chain runs to 209 residues: Probable GTP-binding protein EngB (209 aa).

In terms of domain architecture, EngB-type G spans 22–198 (TPLEIAFVGR…NRTVGSWFDA (177 aa)). Residues Ser-37 and Thr-59 each contribute to the Mg(2+) site.

Belongs to the TRAFAC class TrmE-Era-EngA-EngB-Septin-like GTPase superfamily. EngB GTPase family. Mg(2+) serves as cofactor.

Functionally, necessary for normal cell division and for the maintenance of normal septation. This chain is Probable GTP-binding protein EngB, found in Neisseria gonorrhoeae (strain ATCC 700825 / FA 1090).